We begin with the raw amino-acid sequence, 208 residues long: FMN-dependent NADH:quinone oxidoreductase (208 aa).

FMN contacts are provided by residues 17 to 19 (SNS), 99 to 102 (MWNL), and 143 to 146 (SRGG).

It belongs to the azoreductase type 1 family. As to quaternary structure, homodimer. The cofactor is FMN.

It carries out the reaction 2 a quinone + NADH + H(+) = 2 a 1,4-benzosemiquinone + NAD(+). It catalyses the reaction N,N-dimethyl-1,4-phenylenediamine + anthranilate + 2 NAD(+) = 2-(4-dimethylaminophenyl)diazenylbenzoate + 2 NADH + 2 H(+). Its function is as follows. Quinone reductase that provides resistance to thiol-specific stress caused by electrophilic quinones. In terms of biological role, also exhibits azoreductase activity. Catalyzes the reductive cleavage of the azo bond in aromatic azo compounds to the corresponding amines. The chain is FMN-dependent NADH:quinone oxidoreductase from Staphylococcus haemolyticus (strain JCSC1435).